The primary structure comprises 472 residues: Fumarate hydratase class II (472 aa).

Positions 1–20 (MSPHENPSVETRTESDTFGP) are disordered. Residues 105–107 (SGT), 136–139 (HPND), 146–148 (SSN), and Thr194 contribute to the substrate site. Positions 127–149 (GKRGGKSPVHPNDHCNRGQSSND) are disordered. The active-site Proton donor/acceptor is the His195. Residue Ser325 is part of the active site. Residues Ser326 and 331-333 (KVN) each bind substrate.

This sequence belongs to the class-II fumarase/aspartase family. Fumarase subfamily. As to quaternary structure, homotetramer.

The protein resides in the cytoplasm. The catalysed reaction is (S)-malate = fumarate + H2O. It participates in carbohydrate metabolism; tricarboxylic acid cycle; (S)-malate from fumarate: step 1/1. Its function is as follows. Involved in the TCA cycle. Catalyzes the stereospecific interconversion of fumarate to L-malate. In Methylorubrum extorquens (strain ATCC 14718 / DSM 1338 / JCM 2805 / NCIMB 9133 / AM1) (Methylobacterium extorquens), this protein is Fumarate hydratase class II.